Consider the following 109-residue polypeptide: Large ribosomal subunit protein uL22 (109 aa).

This sequence belongs to the universal ribosomal protein uL22 family. As to quaternary structure, part of the 50S ribosomal subunit.

Its function is as follows. This protein binds specifically to 23S rRNA; its binding is stimulated by other ribosomal proteins, e.g. L4, L17, and L20. It is important during the early stages of 50S assembly. It makes multiple contacts with different domains of the 23S rRNA in the assembled 50S subunit and ribosome. Functionally, the globular domain of the protein is located near the polypeptide exit tunnel on the outside of the subunit, while an extended beta-hairpin is found that lines the wall of the exit tunnel in the center of the 70S ribosome. This Blochmanniella pennsylvanica (strain BPEN) protein is Large ribosomal subunit protein uL22.